We begin with the raw amino-acid sequence, 403 residues long: Tyrosine--tRNA ligase (403 aa).

Residues 45 to 54 carry the 'HIGH' region motif; that stretch reads PTAPDLHLGH. Residues 229 to 233 carry the 'KMSKS' region motif; that stretch reads KMSKS. Lys-232 lines the ATP pocket. In terms of domain architecture, S4 RNA-binding spans 341–402; the sequence is VLLGRLLAEA…GKRRFARIVF (62 aa).

It belongs to the class-I aminoacyl-tRNA synthetase family. TyrS type 2 subfamily. In terms of assembly, homodimer.

The protein resides in the cytoplasm. The catalysed reaction is tRNA(Tyr) + L-tyrosine + ATP = L-tyrosyl-tRNA(Tyr) + AMP + diphosphate + H(+). Catalyzes the attachment of tyrosine to tRNA(Tyr) in a two-step reaction: tyrosine is first activated by ATP to form Tyr-AMP and then transferred to the acceptor end of tRNA(Tyr). The protein is Tyrosine--tRNA ligase of Geobacter metallireducens (strain ATCC 53774 / DSM 7210 / GS-15).